The sequence spans 203 residues: FMN-dependent NADH:quinone oxidoreductase (203 aa).

An FMN-binding site is contributed by 143–146 (SNGG).

Belongs to the azoreductase type 1 family. Homodimer. It depends on FMN as a cofactor.

The catalysed reaction is 2 a quinone + NADH + H(+) = 2 a 1,4-benzosemiquinone + NAD(+). The enzyme catalyses N,N-dimethyl-1,4-phenylenediamine + anthranilate + 2 NAD(+) = 2-(4-dimethylaminophenyl)diazenylbenzoate + 2 NADH + 2 H(+). Quinone reductase that provides resistance to thiol-specific stress caused by electrophilic quinones. Its function is as follows. Also exhibits azoreductase activity. Catalyzes the reductive cleavage of the azo bond in aromatic azo compounds to the corresponding amines. This Streptococcus suis (strain 98HAH33) protein is FMN-dependent NADH:quinone oxidoreductase.